Here is a 556-residue protein sequence, read N- to C-terminus: Peptide chain release factor 3 (556 aa).

The tr-type G domain maps to 28–297 (QQRRNFAIIS…AFLDYALKPG (270 aa)). Residues 37-44 (SHPDAGKT), 105-109 (DTPGH), and 159-162 (NKMD) contribute to the GTP site.

The protein belongs to the TRAFAC class translation factor GTPase superfamily. Classic translation factor GTPase family. PrfC subfamily.

The protein resides in the cytoplasm. In terms of biological role, increases the formation of ribosomal termination complexes and stimulates activities of RF-1 and RF-2. It binds guanine nucleotides and has strong preference for UGA stop codons. It may interact directly with the ribosome. The stimulation of RF-1 and RF-2 is significantly reduced by GTP and GDP, but not by GMP. The protein is Peptide chain release factor 3 of Synechococcus sp. (strain ATCC 27144 / PCC 6301 / SAUG 1402/1) (Anacystis nidulans).